The following is a 315-amino-acid chain: Taste receptor type 2 member 3 (315 aa).

Residues 1 to 5 are Extracellular-facing; that stretch reads MGLTE. A helical transmembrane segment spans residues 6–26; it reads GVFLILSGTQFTLGILVNCFI. Over 27–41 the chain is Cytoplasmic; it reads ELVNGSSWFKTKRMS. A helical membrane pass occupies residues 42-62; the sequence is LSDFIITTLALLRIILLCIIL. Residues 63–93 lie on the Extracellular side of the membrane; sequence TDSFLIEFSPNTHDSGIIMQIIDVSWTFTNH. A helical transmembrane segment spans residues 94–114; that stretch reads LSIWLATCLGVLYCLKIASFS. Residues 115–127 are Cytoplasmic-facing; it reads HPTFLWLKWRVSR. Residues 128–148 form a helical membrane-spanning segment; sequence VMVWMLLGALLLSCGSTASLI. The Extracellular portion of the chain corresponds to 149–185; the sequence is NEFKLYSVFRGIEATRNVTEHFRKKRSEYYLIHVLGT. The N-linked (GlcNAc...) asparagine glycan is linked to Asn-165. A helical membrane pass occupies residues 186–206; sequence LWYLPPLIVSLASYSLLIFSL. Residues 207–233 are Cytoplasmic-facing; sequence GRHTRQMLQNGTSSRDPTTEAHKRAIR. Residues 234–254 traverse the membrane as a helical segment; it reads IILSFFFLFLLYFLAFLIASF. Residues 255-265 are Extracellular-facing; it reads GNFLPKTKMAK. Residues 266–286 traverse the membrane as a helical segment; that stretch reads MIGEVMTMFYPAGHSFILILG. At 287–315 the chain is on the cytoplasmic side; sequence NSKLKQTFVVMLRCESGHLKPGSKGPIFS.

This sequence belongs to the G-protein coupled receptor T2R family.

It is found in the membrane. Functionally, gustducin-coupled receptor implicated in the perception of bitter compounds in the oral cavity and the gastrointestinal tract. Signals through PLCB2 and the calcium-regulated cation channel TRPM5. This Gorilla gorilla gorilla (Western lowland gorilla) protein is Taste receptor type 2 member 3 (TAS2R3).